A 366-amino-acid polypeptide reads, in one-letter code: UDP-N-acetylglucosamine--N-acetylmuramyl-(pentapeptide) pyrophosphoryl-undecaprenol N-acetylglucosamine transferase (366 aa).

Residues 14–16, N128, R169, S201, I251, and Q296 each bind UDP-N-acetyl-alpha-D-glucosamine; that span reads TGG.

It belongs to the glycosyltransferase 28 family. MurG subfamily.

The protein resides in the cell inner membrane. It carries out the reaction di-trans,octa-cis-undecaprenyl diphospho-N-acetyl-alpha-D-muramoyl-L-alanyl-D-glutamyl-meso-2,6-diaminopimeloyl-D-alanyl-D-alanine + UDP-N-acetyl-alpha-D-glucosamine = di-trans,octa-cis-undecaprenyl diphospho-[N-acetyl-alpha-D-glucosaminyl-(1-&gt;4)]-N-acetyl-alpha-D-muramoyl-L-alanyl-D-glutamyl-meso-2,6-diaminopimeloyl-D-alanyl-D-alanine + UDP + H(+). Its pathway is cell wall biogenesis; peptidoglycan biosynthesis. Its function is as follows. Cell wall formation. Catalyzes the transfer of a GlcNAc subunit on undecaprenyl-pyrophosphoryl-MurNAc-pentapeptide (lipid intermediate I) to form undecaprenyl-pyrophosphoryl-MurNAc-(pentapeptide)GlcNAc (lipid intermediate II). The sequence is that of UDP-N-acetylglucosamine--N-acetylmuramyl-(pentapeptide) pyrophosphoryl-undecaprenol N-acetylglucosamine transferase from Christiangramia forsetii (strain DSM 17595 / CGMCC 1.15422 / KT0803) (Gramella forsetii).